Consider the following 273-residue polypeptide: NAD-dependent protein deacylase (273 aa).

A Deacetylase sirtuin-type domain is found at 20 to 272 (RERLRQRIFF…PEFVDKFLKG (253 aa)). 48–67 (GAGISAESGIRTFRAADGLW) serves as a coordination point for NAD(+). Positions 92 and 95 each coordinate substrate. NAD(+) is bound at residue 129–132 (QNID). The Proton acceptor role is filled by His-147. The Zn(2+) site is built by Cys-155 and Cys-174. Residues 214-216 (GTS), 240-242 (NLE), and Ala-258 contribute to the NAD(+) site.

This sequence belongs to the sirtuin family. Class III subfamily. It depends on Zn(2+) as a cofactor.

It is found in the cytoplasm. It carries out the reaction N(6)-acetyl-L-lysyl-[protein] + NAD(+) + H2O = 2''-O-acetyl-ADP-D-ribose + nicotinamide + L-lysyl-[protein]. The enzyme catalyses N(6)-succinyl-L-lysyl-[protein] + NAD(+) + H2O = 2''-O-succinyl-ADP-D-ribose + nicotinamide + L-lysyl-[protein]. It catalyses the reaction N(6)-(2-hydroxyisobutanoyl)-L-lysyl-[protein] + NAD(+) + H2O = 2''-O-(2-hydroxyisobutanoyl)-ADP-D-ribose + nicotinamide + L-lysyl-[protein]. In terms of biological role, NAD-dependent lysine deacetylase that specifically removes acetyl groups on target proteins. Also acts as a protein-lysine deacylase by mediating protein desuccinylation and de-2-hydroxyisobutyrylation. Modulates the activities of several proteins which are inactive in their acylated form. This is NAD-dependent protein deacylase from Salmonella typhi.